The primary structure comprises 353 residues: MLYSLLYGYFNINLFQYLTFRAGLGFFIAFFLTLFLMPKFILWAKAKKANQPISSFVPSHQNKKDTPTMGGIVFVFATIIASLLCASLGNPYVLLGIIVLVGFSFVGFRDDYTKINQQSNAGMSAKMKFGMLFVLSLVVSVLLSVKGLDTFLYAPFLKNPLFEMPTALAVGFWVLVFLSASNAVNLTDGLDGLASVPSIFTLLSLSIFVYVAGNAEFSKYLLYPKVIDVGELFVISLALIGSLFGFLWYNCNPASVFMGDSGSLALGGFIAYNAIVSHNEILLVLMGSIFVIETLSVILQVGSYKTRKKRLFLMAPIHHHFEQKGWAENKVIVRFWIISMLSNLVALLSLKVR.

10 consecutive transmembrane segments (helical) span residues 24 to 44 (LGFF…ILWA), 66 to 86 (TPTM…LLCA), 88 to 108 (LGNP…FVGF), 129 to 149 (FGML…KGLD), 160 to 180 (PLFE…FLSA), 192 to 212 (GLAS…VYVA), 229 to 249 (VGEL…FLWY), 256 to 276 (VFMG…NAIV), 281 to 301 (ILLV…ILQV), and 330 to 350 (KVIV…LLSL).

Belongs to the glycosyltransferase 4 family. MraY subfamily. It depends on Mg(2+) as a cofactor.

It is found in the cell inner membrane. It catalyses the reaction UDP-N-acetyl-alpha-D-muramoyl-L-alanyl-gamma-D-glutamyl-meso-2,6-diaminopimeloyl-D-alanyl-D-alanine + di-trans,octa-cis-undecaprenyl phosphate = di-trans,octa-cis-undecaprenyl diphospho-N-acetyl-alpha-D-muramoyl-L-alanyl-D-glutamyl-meso-2,6-diaminopimeloyl-D-alanyl-D-alanine + UMP. It functions in the pathway cell wall biogenesis; peptidoglycan biosynthesis. Functionally, catalyzes the initial step of the lipid cycle reactions in the biosynthesis of the cell wall peptidoglycan: transfers peptidoglycan precursor phospho-MurNAc-pentapeptide from UDP-MurNAc-pentapeptide onto the lipid carrier undecaprenyl phosphate, yielding undecaprenyl-pyrophosphoryl-MurNAc-pentapeptide, known as lipid I. This Helicobacter acinonychis (strain Sheeba) protein is Phospho-N-acetylmuramoyl-pentapeptide-transferase.